The chain runs to 874 residues: Oxidation resistance protein 1 (874 aa).

A disordered region spans residues 1-89 (MTKDKNSPGL…KTLDKKDGRR (89 aa)). Over residues 64-89 (RRSELKRFYTIDTGQKKTLDKKDGRR) the composition is skewed to basic and acidic residues. Residue S91 is modified to Phosphoserine. The LysM domain occupies 99–142 (IEYTVESRDSLNSIALKFDTTPNELVQLNKLFSRAVVTGQVLYV). Position 119 is a phosphothreonine (T119). The segment covering 151 to 169 (VESSPSLSPVSPLSPTSSE) has biased composition (low complexity). The disordered stretch occupies residues 151–194 (VESSPSLSPVSPLSPTSSEAEFDKTTNPDVHPTEATPSSTFTGI). Phosphoserine is present on residues S201, S202, and S204. One can recognise a GRAM domain in the interval 208–275 (EAFTEKFLKI…EEVMSAAMYK (68 aa)). 3 positions are modified to phosphoserine: S294, S334, and S336. 2 disordered regions span residues 299-406 (CHSK…TNEV) and 431-537 (FQGI…ITSA). Residue T341 is modified to Phosphothreonine. S346 bears the Phosphoserine mark. Over residues 347 to 362 (PIREELVSSDELRQDK) the composition is skewed to basic and acidic residues. The segment covering 363 to 391 (SSGASSESVQTVNQAEVESLTVKSESTGT) has biased composition (polar residues). Residues 452–466 (SFLHENSLHQEESQK) are compositionally biased toward basic and acidic residues. S496 carries the phosphoserine modification. Residues 510 to 527 (HTMQQTKQQRENIQQVSQ) show a composition bias toward polar residues. The mediates oxidative antimutator activity stretch occupies residues 551 to 578 (QRHRLHKFLCLRVGKPMRKTFVSQASAT). Residues 713–874 (ELLLPDQIEK…IQDIEIWAFE (162 aa)) form the TLDc domain.

The protein belongs to the OXR1 family.

Its subcellular location is the mitochondrion. Its function is as follows. May be involved in protection from oxidative damage. The chain is Oxidation resistance protein 1 (OXR1) from Homo sapiens (Human).